A 320-amino-acid polypeptide reads, in one-letter code: MQNRNTFSWVKEQMTRFISVSIMIYVITRTSISNAYPIFAQQGYENPREATGRIVCANCHLANKPVDIEVPQAVLPDTVFEAVVRIPYDMQLKQVLANGKKGSLNVGAVLILPDGFELAPPDRISPEMKEKIGNLSFQSYRPTKKNILVIGPVPGQKYSEIVFPILSPDPATKKDVNFLKYPIYVGGNRGRGQIYPDGSKSNNTVYNATGAGIVSRIVRKEKGGYEITIADASDGHQVIDIIPPGPELLVSEGESIKLDQPLTNNPNVGGFGQGDAEIVLQDPLRVQGLLFFLASVILAQIFLVLKKKQFEKVQLSEMNF.

An N-terminal signal peptide occupies residues 1–35 (MQNRNTFSWVKEQMTRFISVSIMIYVITRTSISNA). Residues Tyr-36, Cys-56, Cys-59, and His-60 each contribute to the heme site. Residues 286 to 306 (VQGLLFFLASVILAQIFLVLK) traverse the membrane as a helical segment.

Belongs to the cytochrome f family. The 4 large subunits of the cytochrome b6-f complex are cytochrome b6, subunit IV (17 kDa polypeptide, petD), cytochrome f and the Rieske protein, while the 4 small subunits are PetG, PetL, PetM and PetN. The complex functions as a dimer. The cofactor is heme.

The protein localises to the plastid. It is found in the chloroplast thylakoid membrane. In terms of biological role, component of the cytochrome b6-f complex, which mediates electron transfer between photosystem II (PSII) and photosystem I (PSI), cyclic electron flow around PSI, and state transitions. In Drimys granadensis, this protein is Cytochrome f.